A 288-amino-acid chain; its full sequence is ATP synthase gamma chain (288 aa).

This sequence belongs to the ATPase gamma chain family. As to quaternary structure, F-type ATPases have 2 components, CF(1) - the catalytic core - and CF(0) - the membrane proton channel. CF(1) has five subunits: alpha(3), beta(3), gamma(1), delta(1), epsilon(1). CF(0) has three main subunits: a, b and c.

It localises to the cell inner membrane. Functionally, produces ATP from ADP in the presence of a proton gradient across the membrane. The gamma chain is believed to be important in regulating ATPase activity and the flow of protons through the CF(0) complex. This is ATP synthase gamma chain from Laribacter hongkongensis (strain HLHK9).